We begin with the raw amino-acid sequence, 790 residues long: Chorion peroxidase (790 aa).

The signal sequence occupies residues 1–16; the sequence is MAKKVLLLSLYSAVLS. A propeptide spanning residues 17 to 209 is cleaved from the precursor; that stretch reads TWFGFGYVQC…ARIPRAIRKR (193 aa). Position 210 is an N-acetylcysteine; in Chorion peroxidase light chain (Cys-210). A disulfide bridge links Cys-216 with Cys-229. An N-linked (Man) tryptophan glycan is attached at Trp-259. Catalysis depends on His-305, which acts as the Proton acceptor. The N-linked (GlcNAc...) asparagine glycan is linked to Asn-327. A 3',4'-dihydroxyphenylalanine modification is found at Tyr-353. The cysteines at positions 433 and 440 are disulfide-linked. Trp-479 carries N-linked (Man) tryptophan glycosylation. Heme b is bound at residue His-551. An N-linked (Man) tryptophan glycan is attached at Trp-680. Cys-746 and Cys-774 form a disulfide bridge. An N-linked (Man) tryptophan glycan is attached at Trp-785.

Belongs to the peroxidase family. XPO subfamily. As to quaternary structure, heterodimer. Heme b serves as cofactor. In terms of processing, N-glycosylated on Trp by mannose and on Asn by N-acetylglucosamine. Post-translationally, there is a hexose glycosylation of an unidentified residue between 654 and 708; Trp-680 is conserved in closely related species and is probably mannosylated.

Its subcellular location is the secreted. It carries out the reaction 2 a phenolic donor + H2O2 = 2 a phenolic radical donor + 2 H2O. Extremely resistant to denaturating agents, such as SDS and organic solvents. Involved in the formation of a rigid and insoluble egg chorion by catalyzing chorion protein cross-linking through dityrosine formation and phenol oxidase-catalyzed chorion melanization. This chain is Chorion peroxidase (pxt), found in Aedes aegypti (Yellowfever mosquito).